Reading from the N-terminus, the 229-residue chain is PHO85 cyclin-5 (229 aa).

Positions 1–24 (MDGNHRFTPDSKEFNTVVKSKESS) are enriched in basic and acidic residues. Residues 1-46 (MDGNHRFTPDSKEFNTVVKSKESSTGRNPYQTPPLEHNGTHHQTNY) are disordered.

It belongs to the cyclin family. PCL1,2 subfamily. As to quaternary structure, forms a cyclin-CDK complex with PHO85.

Functionally, cyclin partner of the cyclin-dependent kinase (CDK) PHO85. Positively controls degradation of transcription factor GCN4 under favorable growth conditions. The PCL5-PHO85 cyclin-CDK holoenzyme phosphorylates GCN4, which is required for its degradation by the E3 ubiquitin ligase complex SCF(Cdc4). Amino acid starvation reduces PCL5-PHO85-associated GCN4 kinase activity and leads to stabilization of GCN4. The protein is PHO85 cyclin-5 (PCL5) of Saccharomyces cerevisiae (strain ATCC 204508 / S288c) (Baker's yeast).